The following is a 166-amino-acid chain: Protein-export protein SecB (166 aa).

This sequence belongs to the SecB family. In terms of assembly, homotetramer, a dimer of dimers. One homotetramer interacts with 1 SecA dimer.

It is found in the cytoplasm. Its function is as follows. One of the proteins required for the normal export of preproteins out of the cell cytoplasm. It is a molecular chaperone that binds to a subset of precursor proteins, maintaining them in a translocation-competent state. It also specifically binds to its receptor SecA. This is Protein-export protein SecB from Cereibacter sphaeroides (strain ATCC 17029 / ATH 2.4.9) (Rhodobacter sphaeroides).